Consider the following 52-residue polypeptide: Teratocyte protein CftICK-I (52 aa).

The signal sequence occupies residues 1–19 (MYKLCILFLVVIFAVMAIA). 3 cysteine pairs are disulfide-bonded: C22-C37, C29-C41, and C36-C51.

As to expression, abundantly expressed by teratocytes, which are extra-embryonic cells released by parasitoid wasps into their hosts during larval eclosion.

It localises to the secreted. In terms of biological role, this endoparasitoid wasp peptide has immununosuppressive, antimicrobial and insecticidal activities. Suppress cellular immunity which is detectable as a reduction of hemocyte encapsulation in the host. Shows potent antifungal activity against C.albicans (MIC~0.25 ug/ml). In vivo, ingestion of this peptide (probably at excessive doses) increases larval mortality and reduces leaf consumption of D.saccharalis, a permissive host for C.flavipes. This is Teratocyte protein CftICK-I from Cotesia flavipes (Parasitic wasp).